A 338-amino-acid chain; its full sequence is Anthranilate phosphoribosyltransferase (338 aa).

5-phospho-alpha-D-ribose 1-diphosphate is bound by residues G81, 84-85 (GD), T89, 91-94 (NIST), 109-117 (KHGNRNLSS), and A121. G81 contributes to the anthranilate binding site. A Mg(2+)-binding site is contributed by S93. N112 is a binding site for anthranilate. R167 lines the anthranilate pocket. The Mg(2+) site is built by D226 and E227.

It belongs to the anthranilate phosphoribosyltransferase family. As to quaternary structure, homodimer. Requires Mg(2+) as cofactor.

It catalyses the reaction N-(5-phospho-beta-D-ribosyl)anthranilate + diphosphate = 5-phospho-alpha-D-ribose 1-diphosphate + anthranilate. It participates in amino-acid biosynthesis; L-tryptophan biosynthesis; L-tryptophan from chorismate: step 2/5. Its function is as follows. Catalyzes the transfer of the phosphoribosyl group of 5-phosphorylribose-1-pyrophosphate (PRPP) to anthranilate to yield N-(5'-phosphoribosyl)-anthranilate (PRA). The polypeptide is Anthranilate phosphoribosyltransferase (Cereibacter sphaeroides (strain ATCC 17025 / ATH 2.4.3) (Rhodobacter sphaeroides)).